The sequence spans 120 residues: Large ribosomal subunit protein uL22 (120 aa).

This sequence belongs to the universal ribosomal protein uL22 family. In terms of assembly, part of the 50S ribosomal subunit.

In terms of biological role, this protein binds specifically to 23S rRNA; its binding is stimulated by other ribosomal proteins, e.g. L4, L17, and L20. It is important during the early stages of 50S assembly. It makes multiple contacts with different domains of the 23S rRNA in the assembled 50S subunit and ribosome. Its function is as follows. The globular domain of the protein is located near the polypeptide exit tunnel on the outside of the subunit, while an extended beta-hairpin is found that lines the wall of the exit tunnel in the center of the 70S ribosome. The polypeptide is Large ribosomal subunit protein uL22 (Corynebacterium glutamicum (strain R)).